The primary structure comprises 96 residues: MSIRPLHDRVIVKRKDAESKSEGGIVLMGSATEKSTRAEVIAVGNGRILENGEVRPLDVKVGDQVIFSEGYGVKTEKIDGEEVLILSESDILAIVE.

The protein belongs to the GroES chaperonin family. As to quaternary structure, heptamer of 7 subunits arranged in a ring. Interacts with the chaperonin GroEL.

The protein resides in the cytoplasm. In terms of biological role, together with the chaperonin GroEL, plays an essential role in assisting protein folding. The GroEL-GroES system forms a nano-cage that allows encapsulation of the non-native substrate proteins and provides a physical environment optimized to promote and accelerate protein folding. GroES binds to the apical surface of the GroEL ring, thereby capping the opening of the GroEL channel. The polypeptide is Co-chaperonin GroES (Colwellia maris).